The primary structure comprises 158 residues: 3-hydroxyacyl-[acyl-carrier-protein] dehydratase FabZ (158 aa).

The active site involves H62.

Belongs to the thioester dehydratase family. FabZ subfamily.

Its subcellular location is the cytoplasm. It carries out the reaction a (3R)-hydroxyacyl-[ACP] = a (2E)-enoyl-[ACP] + H2O. Its function is as follows. Involved in unsaturated fatty acids biosynthesis. Catalyzes the dehydration of short chain beta-hydroxyacyl-ACPs and long chain saturated and unsaturated beta-hydroxyacyl-ACPs. This chain is 3-hydroxyacyl-[acyl-carrier-protein] dehydratase FabZ, found in Novosphingobium aromaticivorans (strain ATCC 700278 / DSM 12444 / CCUG 56034 / CIP 105152 / NBRC 16084 / F199).